A 188-amino-acid polypeptide reads, in one-letter code: PRA1 family protein 3 (188 aa).

Residue M1 is modified to N-acetylmethionine. Residues M1–R35 are Cytoplasmic-facing. A run of 2 helical transmembrane segments spans residues V36–A56 and I57–F77. Topologically, residues L78–M93 are cytoplasmic. 2 consecutive transmembrane segments (helical) span residues K94 to S114 and Y115 to I135. Residues H136 to E188 are Cytoplasmic-facing. The interval H136–E188 is targeting to endoplasmic reticulum membrane.

It belongs to the PRA1 family. As to quaternary structure, binds to prenylated RAB and Ras superfamily members.

The protein localises to the endoplasmic reticulum membrane. It localises to the cell membrane. The protein resides in the cytoplasm. It is found in the cytoskeleton. Its function is as follows. Regulates intracellular concentrations of taurine and glutamate. Negatively modulates SLC1A1/EAAC1 glutamate transport activity by decreasing its affinity for glutamate in a PKC activity-dependent manner. May be involved in membrane traffic. This chain is PRA1 family protein 3 (ARL6IP5), found in Gallus gallus (Chicken).